The primary structure comprises 239 residues: Large ribosomal subunit protein uL30 (239 aa).

The interval Met1–Arg37 is disordered. Positions Val9–Lys28 are enriched in basic and acidic residues.

It belongs to the universal ribosomal protein uL30 family.

The chain is Large ribosomal subunit protein uL30 (RPL7) from Tetrahymena thermophila.